Here is a 383-residue protein sequence, read N- to C-terminus: Homeobox protein SHOOT MERISTEMLESS (383 aa).

Residues histidine 37–tyrosine 58 form a disordered region. An ELK domain is found at glutamate 263–phenylalanine 283. Residues methionine 284–serine 347 constitute a DNA-binding region (homeobox; TALE-type).

The protein belongs to the TALE/KNOX homeobox family.

The protein resides in the nucleus. In terms of biological role, required for shoot apical meristem formation during embryogenesis. Probably binds to the DNA sequence 5'-TGAC-3'. The sequence is that of Homeobox protein SHOOT MERISTEMLESS (STM) from Brassica oleracea (Wild cabbage).